The chain runs to 199 residues: Peptidyl-tRNA hydrolase (199 aa).

Tyr-15 provides a ligand contact to tRNA. The active-site Proton acceptor is His-20. 3 residues coordinate tRNA: Tyr-66, Asn-68, and Asn-114.

Belongs to the PTH family. In terms of assembly, monomer.

It localises to the cytoplasm. It carries out the reaction an N-acyl-L-alpha-aminoacyl-tRNA + H2O = an N-acyl-L-amino acid + a tRNA + H(+). Its function is as follows. Hydrolyzes ribosome-free peptidyl-tRNAs (with 1 or more amino acids incorporated), which drop off the ribosome during protein synthesis, or as a result of ribosome stalling. In terms of biological role, catalyzes the release of premature peptidyl moieties from peptidyl-tRNA molecules trapped in stalled 50S ribosomal subunits, and thus maintains levels of free tRNAs and 50S ribosomes. This is Peptidyl-tRNA hydrolase from Burkholderia cenocepacia (strain HI2424).